We begin with the raw amino-acid sequence, 105 residues long: UPF0235 protein RPR_04990 (105 aa).

Belongs to the UPF0235 family.

The chain is UPF0235 protein RPR_04990 from Rickettsia peacockii (strain Rustic).